Here is a 911-residue protein sequence, read N- to C-terminus: Nitrate reductase [NADH], clone PBNBR1412 (911 aa).

Positions 53 to 72 are disordered; it reads NDAVDDSYDSSDDEDESHNR. Residues 56–68 show a composition bias toward acidic residues; sequence VDDSYDSSDDEDE. C191 lines the Mo-molybdopterin pocket. Positions 539-614 constitute a Cytochrome b5 heme-binding domain; the sequence is AKMYSMSEVR…LEDYRIGELI (76 aa). Heme is bound by residues H574 and H597. Positions 654–766 constitute an FAD-binding FR-type domain; the sequence is REKVPVTLIE…KGPLGHIEYL (113 aa). FAD-binding positions include 706-709, 723-727, F728, F735, 740-742, and T793; these read RAYT, VVKVY, and LMS.

Belongs to the nitrate reductase family. In terms of assembly, homodimer. It depends on FAD as a cofactor. The cofactor is heme. Mo-molybdopterin is required as a cofactor.

It carries out the reaction nitrite + NAD(+) + H2O = nitrate + NADH + H(+). In terms of biological role, nitrate reductase is a key enzyme involved in the first step of nitrate assimilation in plants, fungi and bacteria. The protein is Nitrate reductase [NADH], clone PBNBR1412 (NIA2) of Brassica napus (Rape).